A 307-amino-acid chain; its full sequence is Predicted GPI-anchored protein 44 (307 aa).

Positions 1-22 (MLSTNNLLILLIFSFLITNVKS) are cleaved as a signal peptide. Asparagine 146 and asparagine 217 each carry an N-linked (GlcNAc...) asparagine glycan. The interval 232-261 (TPQPLLETPSQESSAPNIDSTTPTTIDNTV) is disordered. Polar residues predominate over residues 239 to 254 (TPSQESSAPNIDSTTP). The GPI-anchor amidated glycine moiety is linked to residue glycine 286. The propeptide at 287 to 307 (GAMGYPSISVALGLVFIAYLV) is removed in mature form.

The protein resides in the cell membrane. In Candida albicans (strain SC5314 / ATCC MYA-2876) (Yeast), this protein is Predicted GPI-anchored protein 44 (PGA44).